A 336-amino-acid chain; its full sequence is Dual specificity mitogen-activated protein kinase kinase sek-1 (336 aa).

The Protein kinase domain maps to 50 to 311; that stretch reads LVVLEELGKG…YPELLAMPFM (262 aa). Residues 56-64 and lysine 79 contribute to the ATP site; that span reads LGKGGYGIV. Aspartate 176 functions as the Proton acceptor in the catalytic mechanism. Serine 204 carries the post-translational modification Phosphoserine. Phosphothreonine is present on threonine 208.

This sequence belongs to the protein kinase superfamily. STE Ser/Thr protein kinase family. MAP kinase kinase subfamily. Interacts with nsy-1. Interacts with unc-16. Mg(2+) serves as cofactor. Expressed in linker cell in males.

The enzyme catalyses L-seryl-[protein] + ATP = O-phospho-L-seryl-[protein] + ADP + H(+). It catalyses the reaction L-threonyl-[protein] + ATP = O-phospho-L-threonyl-[protein] + ADP + H(+). The catalysed reaction is L-tyrosyl-[protein] + ATP = O-phospho-L-tyrosyl-[protein] + ADP + H(+). With respect to regulation, activated by nsy-1-mediated phosphorylation. Functionally, dual specificity protein kinase which acts as an essential component of the p38 signal transduction pathway which is also composed of upstream effector nsy-1 and downstream effector pmk-1. May phosphorylate pmk-1. Downstream of CaMKII unc-43 and adapter protein tir-1, plays a role in determining asymmetric cell fates in olfactory AWC neurons during neuronal development. Activation results in the repression of odorant receptor str-2 expression in one of the 2 AWC neurons. Involved in resistance to pathogenic Gram-positive and Gram-negative bacterial and fungal infection. Involved in resistance to the nematotoxic C.cinerea galectin Cgl2. Probably by promoting pmk-1-mediated activation of skn-1, involved in the up-regulation of gcs-1 and glutathione-S-transferase gst-4 expression upon bacterial infection. Probably downstream of tir-1, required for the expression of antimicrobial peptide nlp-29 in the epidermis in response to fungal infection or physical injury. Regulates susceptibility of B.thuringiensis pore-forming toxin Cry5B and Cry21A. Involved in the response to oxidative stress. May regulate transcription factor daf-16 localization during oxidative stress. By phosphorylating pmk-1, regulates skn-1 localization during oxidative stress. By phosphorylating and activating pmk-1, plays a role in the stabilization of transcription factor rnt-1 in the intestine during oxidative stress. Up-regulates expression of gcs-1 in intestine upon arsenite treatment. Regulates germline proliferation in response to osmotic stress, starvation and germline apoptosis induced by heavy metals, such as Cu(2+). In association with mek-1, regulates germline cell apoptosis in response to oxidative, osmotic and heat shock stresses. Plays a role downstream of tir-1/nsy-1 in regulating susceptibility to anoxia. In males, by regulating pqn-41 expression, involved in non-apoptotic death of the linker cell which guides gonad elongation during larval development. Involved in egg laying. The protein is Dual specificity mitogen-activated protein kinase kinase sek-1 of Caenorhabditis elegans.